The following is a 313-amino-acid chain: 4-diphosphocytidyl-2-C-methyl-D-erythritol kinase (313 aa).

K10 is a catalytic residue. 95-105 lines the ATP pocket; that stretch reads PVTAGLGGGSS. D136 is an active-site residue. A disordered region spans residues 289 to 313; that stretch reads HPRVSPWRSPRSASSRSTRRSSRPT. Residues 292–304 are compositionally biased toward low complexity; that stretch reads VSPWRSPRSASSR.

The protein belongs to the GHMP kinase family. IspE subfamily.

The enzyme catalyses 4-CDP-2-C-methyl-D-erythritol + ATP = 4-CDP-2-C-methyl-D-erythritol 2-phosphate + ADP + H(+). It participates in isoprenoid biosynthesis; isopentenyl diphosphate biosynthesis via DXP pathway; isopentenyl diphosphate from 1-deoxy-D-xylulose 5-phosphate: step 3/6. Functionally, catalyzes the phosphorylation of the position 2 hydroxy group of 4-diphosphocytidyl-2C-methyl-D-erythritol. The chain is 4-diphosphocytidyl-2-C-methyl-D-erythritol kinase from Anaeromyxobacter sp. (strain K).